The chain runs to 222 residues: Holliday junction branch migration complex subunit RuvA (222 aa).

Residues 1-67 (MISWLNGLKI…EDGSQLIGFL (67 aa)) form a domain I region. The segment at 68-146 (NKLERDLFRK…DLIGSSLKKT (79 aa)) is domain II. The segment at 147–155 (NNHLELEYE) is flexible linker. The tract at residues 155–222 (ETNVADEVRS…TLIRINTESG (68 aa)) is domain III.

This sequence belongs to the RuvA family. Homotetramer. Forms an RuvA(8)-RuvB(12)-Holliday junction (HJ) complex. HJ DNA is sandwiched between 2 RuvA tetramers; dsDNA enters through RuvA and exits via RuvB. An RuvB hexamer assembles on each DNA strand where it exits the tetramer. Each RuvB hexamer is contacted by two RuvA subunits (via domain III) on 2 adjacent RuvB subunits; this complex drives branch migration. In the full resolvosome a probable DNA-RuvA(4)-RuvB(12)-RuvC(2) complex forms which resolves the HJ.

It is found in the cytoplasm. Its function is as follows. The RuvA-RuvB-RuvC complex processes Holliday junction (HJ) DNA during genetic recombination and DNA repair, while the RuvA-RuvB complex plays an important role in the rescue of blocked DNA replication forks via replication fork reversal (RFR). RuvA specifically binds to HJ cruciform DNA, conferring on it an open structure. The RuvB hexamer acts as an ATP-dependent pump, pulling dsDNA into and through the RuvAB complex. HJ branch migration allows RuvC to scan DNA until it finds its consensus sequence, where it cleaves and resolves the cruciform DNA. This chain is Holliday junction branch migration complex subunit RuvA, found in Prochlorococcus marinus (strain SARG / CCMP1375 / SS120).